We begin with the raw amino-acid sequence, 325 residues long: DNA-directed RNA polymerase subunit alpha (325 aa).

Positions methionine 1–glutamate 231 are alpha N-terminal domain (alpha-NTD). An alpha C-terminal domain (alpha-CTD) region spans residues valine 246–lysine 325.

This sequence belongs to the RNA polymerase alpha chain family. Homodimer. The RNAP catalytic core consists of 2 alpha, 1 beta, 1 beta' and 1 omega subunit. When a sigma factor is associated with the core the holoenzyme is formed, which can initiate transcription.

The enzyme catalyses RNA(n) + a ribonucleoside 5'-triphosphate = RNA(n+1) + diphosphate. In terms of biological role, DNA-dependent RNA polymerase catalyzes the transcription of DNA into RNA using the four ribonucleoside triphosphates as substrates. This chain is DNA-directed RNA polymerase subunit alpha, found in Herminiimonas arsenicoxydans.